A 1118-amino-acid chain; its full sequence is Repetin (1118 aa).

Positions Met-1–Ser-91 are S-100-like. EF-hand domains follow at residues Lys-13–Pro-48 and Asn-49–Ala-84. The Ca(2+) site is built by Ser-27, Glu-32, Asp-62, Asp-64, Asn-66, Tyr-68, and Glu-73. Residues Tyr-94–Tyr-1118 form a disordered region. Residues Ser-100 to Ser-115 show a composition bias toward basic and acidic residues. Residues Ser-138–Asp-148 are compositionally biased toward polar residues. 2 stretches are compositionally biased toward basic and acidic residues: residues Gln-149–Pro-164 and Phe-172–Thr-186. The segment covering Gly-237–Gly-252 has biased composition (low complexity). Residues Tyr-259–Asn-299 show a composition bias toward polar residues. 48 repeat units span residues Gln-273–Ser-284, Gln-285–Gly-296, Gln-297–Glu-308, Gln-309–Gly-320, Gln-321–Gly-332, Gln-333–Gly-344, Gln-345–Gly-356, Gln-357–Gly-368, Gln-369–Gly-380, Gln-381–Gly-392, Gln-393–Gly-404, Gln-405–Gly-416, Gln-417–Gly-428, Gln-429–Gly-440, Gln-441–Gly-452, Gln-453–Gly-464, Gln-465–Gly-476, Gln-477–His-488, Arg-489–Gly-500, Gln-501–Gly-512, Gln-513–His-524, Arg-525–Gly-536, Gln-537–Gly-548, Gln-549–His-560, Arg-561–Asp-572, Gln-573–Gly-584, Gln-585–His-596, Arg-597–Asp-608, Gln-609–Gly-620, Gln-621–His-632, Gln-633–Gly-644, His-645–Gly-656, Gln-657–Gly-668, Gln-669–Gly-680, Gln-681–Gly-692, Gln-693–Gly-704, Gln-705–Gly-716, Gln-717–Gly-728, Gln-729–Gly-740, Gln-741–Gly-752, Gln-753–Gly-764, Gln-765–His-776, Arg-777–Gly-788, Gln-789–Gly-800, Gln-801–His-812, Arg-813–Asp-824, Gln-825–Gly-836, and Gln-837–Gly-848. The segment at Gln-273–Gly-848 is 48 X 12 AA approximate tandem repeats of Q-[KT]-[GD]-[RS]-Q-[DG]-Q-S-[PS]-H-X-G. The interval Gln-321–Gly-764 is 22 X 12 AA approximate tandem repeats of Q-K-G-R-Q-D-Q-S-P-H-Q-G. Composition is skewed to basic and acidic residues over residues Gly-347 to Gln-363 and Gly-371 to Gln-387. Residues Asp-434–Lys-466 are compositionally biased toward polar residues. Positions Gly-467–Gln-481 are enriched in basic and acidic residues. 2 stretches are compositionally biased toward polar residues: residues Asp-482–Tyr-535 and Leu-543–His-570. Composition is skewed to polar residues over residues Asp-587 to His-606 and Gly-616 to Gln-643. Over residues Asp-710–His-726 the composition is skewed to polar residues. Composition is skewed to basic and acidic residues over residues Gly-731–Gln-747 and Gly-755–Gln-769. Polar residues-rich tracts occupy residues Leu-795 to His-822, Ser-833 to Gly-848, and Thr-855 to Ser-864. The span at Leu-865–Tyr-875 shows a compositional bias: basic and acidic residues. Polar residues predominate over residues Val-876 to Asn-889. 5 stretches are compositionally biased toward basic and acidic residues: residues Ser-890 to Gln-908, Glu-947 to Glu-965, Thr-978 to Asn-998, Gln-1005 to Tyr-1045, and Pro-1056 to Glu-1065.

The protein belongs to the S100-fused protein family. Potential substrate of transglutaminase. Some arginines are probably converted to citrullines by peptidylarginine deimidase. Detectable in the stratified internal epithelia of forestomach and tongue and to a lesser degree in normal skin epidermis, where it is restricted to the differentiated suprabasal cell layers. Overexpressed in skin tumors.

The protein localises to the secreted. It is found in the extracellular space. It localises to the extracellular matrix. Involved in the cornified cell envelope formation. Multifunctional epidermal matrix protein. The protein is Repetin (Rptn) of Mus musculus (Mouse).